Here is a 210-residue protein sequence, read N- to C-terminus: MGQVFLLMPVLLVSCFLGQGAAMENQRLFNIAVNRVQHLHLLAQKMFNDFEGTLLPDERRQLNKIFLLDFCNSDSIVSPIDKQETQKSSVLKLLHISFRLIESWEYPSQTLTISNSLMVRNSNQISEKLSDLKVGINLLIKGSQDGVLSLDDNDSQHLPPYGNYYQNLGGDGNVRRNYELLACFKKDMHKVETYLTVAKCRKYLEANCTL.

The N-terminal stretch at 1-22 is a signal peptide; that stretch reads MGQVFLLMPVLLVSCFLGQGAA. Histidine 38 is a Zn(2+) binding site. A disulfide bridge connects residues cysteine 71 and cysteine 183. Glutamate 192 is a Zn(2+) binding site. Cysteine 200 and cysteine 208 are joined by a disulfide.

Belongs to the somatotropin/prolactin family.

Its subcellular location is the secreted. Growth hormone plays an important role in growth control and is involved in the regulation of several anabolic processes. Implicated as an osmoregulatory substance important for seawater adaptation. This Oncorhynchus mykiss (Rainbow trout) protein is Somatotropin-2 (gh2).